Reading from the N-terminus, the 238-residue chain is Ubiquinone biosynthesis O-methyltransferase (238 aa).

S-adenosyl-L-methionine contacts are provided by arginine 40, glycine 59, aspartate 80, and methionine 125.

This sequence belongs to the methyltransferase superfamily. UbiG/COQ3 family.

The enzyme catalyses a 3-demethylubiquinol + S-adenosyl-L-methionine = a ubiquinol + S-adenosyl-L-homocysteine + H(+). The catalysed reaction is a 3-(all-trans-polyprenyl)benzene-1,2-diol + S-adenosyl-L-methionine = a 2-methoxy-6-(all-trans-polyprenyl)phenol + S-adenosyl-L-homocysteine + H(+). Its pathway is cofactor biosynthesis; ubiquinone biosynthesis. In terms of biological role, O-methyltransferase that catalyzes the 2 O-methylation steps in the ubiquinone biosynthetic pathway. This chain is Ubiquinone biosynthesis O-methyltransferase, found in Paracidovorax citrulli (strain AAC00-1) (Acidovorax citrulli).